The following is a 362-amino-acid chain: MAFKQLLTAISIVSVANAALTRRVACPDGVNTATNAVCCSLFAVRDLIQDQLFDGGECGEEVHESLRLTFHDAIGISPTIASTGVFGGGGADGSIAIFAEIETNFHANNGVDEIIGEQAPFIQMTNMTTADFIQFAGAVGVSNCPGAPALPVFVGRPDATQPAPDKTVPEPFDTVDSILARFADAGGFSSAEVVALLASHTIAAADHVDPSIPGTPFDSTPEIFDTQFFIETQLRGILFPGTGGNQGEVESPLHGEIRLQSDSELARDSRTACEWQSFVNNQAKIQSAFKAAFRKMTILGHSESSLIECSEVIQTPPALEGNAHLPAGQTMNDIEQACATTPFPSLSADPGPATSVAPVPPS.

Positions 1 to 18 are cleaved as a signal peptide; the sequence is MAFKQLLTAISIVSVANA. A propeptide spanning residues 19 to 23 is cleaved from the precursor; that stretch reads ALTRR. Disulfide bonds link Cys26–Cys39, Cys38–Cys309, Cys58–Cys144, and Cys273–Cys338. Mn(2+)-binding residues include Glu60 and Glu64. The active-site Proton acceptor is His71. Residues Asp72, Gly90, Asp92, and Ser94 each contribute to the Ca(2+) site. A glycan (N-linked (GlcNAc...) asparagine) is linked at Asn126. Residue His200 coordinates heme b. Thr201 contributes to the Ca(2+) binding site. Position 206 (Asp206) interacts with Mn(2+). Asp218, Thr220, Ile223, and Asp225 together coordinate Ca(2+). Residues 341–362 are disordered; it reads TPFPSLSADPGPATSVAPVPPS.

The protein belongs to the peroxidase family. Ligninase subfamily. Heme b serves as cofactor. The cofactor is Ca(2+).

Its subcellular location is the secreted. The catalysed reaction is 2 Mn(2+) + H2O2 + 2 H(+) = 2 Mn(3+) + 2 H2O. Functionally, catalyzes the oxidation of Mn(2+) to Mn(3+). The latter, acting as a diffusible redox mediator, is capable of oxidizing a variety of lignin compounds. This isozyme is also able to oxidize phenols and amines in the absence of Mn(2+), similar to versatile peroxidases. The chain is Manganese peroxidase 3 (mnp3) from Phlebia radiata (White-rot fungus).